Consider the following 302-residue polypeptide: Aspartate carbamoyltransferase catalytic subunit (302 aa).

The carbamoyl phosphate site is built by arginine 53 and threonine 54. Residue lysine 82 participates in L-aspartate binding. Residues arginine 103, histidine 131, and glutamine 134 each contribute to the carbamoyl phosphate site. Positions 164 and 223 each coordinate L-aspartate. 2 residues coordinate carbamoyl phosphate: leucine 260 and proline 261.

Belongs to the aspartate/ornithine carbamoyltransferase superfamily. ATCase family. Heterooligomer of catalytic and regulatory chains.

The enzyme catalyses carbamoyl phosphate + L-aspartate = N-carbamoyl-L-aspartate + phosphate + H(+). It functions in the pathway pyrimidine metabolism; UMP biosynthesis via de novo pathway; (S)-dihydroorotate from bicarbonate: step 2/3. Functionally, catalyzes the condensation of carbamoyl phosphate and aspartate to form carbamoyl aspartate and inorganic phosphate, the committed step in the de novo pyrimidine nucleotide biosynthesis pathway. The chain is Aspartate carbamoyltransferase catalytic subunit from Methanococcus vannielii (strain ATCC 35089 / DSM 1224 / JCM 13029 / OCM 148 / SB).